Consider the following 703-residue polypeptide: Ion-translocating oxidoreductase complex subunit C (703 aa).

4Fe-4S ferredoxin-type domains lie at 368–397 and 407–436; these read MAPQ…QQLY and KARN…VQYY. [4Fe-4S] cluster-binding residues include Cys-377, Cys-380, Cys-383, Cys-387, Cys-416, Cys-419, Cys-422, and Cys-426. Disordered regions lie at residues 505 to 558 and 653 to 674; these read AVPA…EDPR and AQQA…EEDP. Basic and acidic residues predominate over residues 524–539; it reads AAREARKAQARERRAQ.

The protein belongs to the 4Fe4S bacterial-type ferredoxin family. RnfC subfamily. As to quaternary structure, the complex is composed of six subunits: RnfA, RnfB, RnfC, RnfD, RnfE and RnfG. It depends on [4Fe-4S] cluster as a cofactor.

The protein resides in the cell inner membrane. Part of a membrane-bound complex that couples electron transfer with translocation of ions across the membrane. The chain is Ion-translocating oxidoreductase complex subunit C from Serratia proteamaculans (strain 568).